Here is a 175-residue protein sequence, read N- to C-terminus: CDP-archaeol synthase (175 aa).

4 helical membrane-spanning segments follow: residues 41 to 61 (GLFSGIFCGFLAGCVEVWLSF), 82 to 102 (LIVVLALASGALFGDMFKSFF), 122 to 142 (FVVGAWVFTYLAAPEWFVSNF), and 150 to 170 (VIIITPLLHLTTNIIGYFIGV).

The protein belongs to the CDP-archaeol synthase family. Requires Mg(2+) as cofactor.

It localises to the cell membrane. It catalyses the reaction 2,3-bis-O-(geranylgeranyl)-sn-glycerol 1-phosphate + CTP + H(+) = CDP-2,3-bis-O-(geranylgeranyl)-sn-glycerol + diphosphate. Its pathway is membrane lipid metabolism; glycerophospholipid metabolism. Its function is as follows. Catalyzes the formation of CDP-2,3-bis-(O-geranylgeranyl)-sn-glycerol (CDP-archaeol) from 2,3-bis-(O-geranylgeranyl)-sn-glycerol 1-phosphate (DGGGP) and CTP. This reaction is the third ether-bond-formation step in the biosynthesis of archaeal membrane lipids. The protein is CDP-archaeol synthase of Methanosarcina mazei (strain ATCC BAA-159 / DSM 3647 / Goe1 / Go1 / JCM 11833 / OCM 88) (Methanosarcina frisia).